Consider the following 252-residue polypeptide: Imidazole glycerol phosphate synthase subunit HisF (252 aa).

Active-site residues include aspartate 11 and aspartate 130.

It belongs to the HisA/HisF family. As to quaternary structure, heterodimer of HisH and HisF.

It is found in the cytoplasm. The catalysed reaction is 5-[(5-phospho-1-deoxy-D-ribulos-1-ylimino)methylamino]-1-(5-phospho-beta-D-ribosyl)imidazole-4-carboxamide + L-glutamine = D-erythro-1-(imidazol-4-yl)glycerol 3-phosphate + 5-amino-1-(5-phospho-beta-D-ribosyl)imidazole-4-carboxamide + L-glutamate + H(+). The protein operates within amino-acid biosynthesis; L-histidine biosynthesis; L-histidine from 5-phospho-alpha-D-ribose 1-diphosphate: step 5/9. Functionally, IGPS catalyzes the conversion of PRFAR and glutamine to IGP, AICAR and glutamate. The HisF subunit catalyzes the cyclization activity that produces IGP and AICAR from PRFAR using the ammonia provided by the HisH subunit. The chain is Imidazole glycerol phosphate synthase subunit HisF from Hyphomonas neptunium (strain ATCC 15444).